A 155-amino-acid polypeptide reads, in one-letter code: Phosphoprotein pp24 (155 aa).

The tract at residues 1–50 is disordered; it reads MEFEAEHEGLTASWVAPAPQGGKGAEGRAGVADEAGHGKTEAECAEDGEK. The span at 34–50 shows a compositional bias: basic and acidic residues; that stretch reads EAGHGKTEAECAEDGEK. A coiled-coil region spans residues 76 to 107; sequence RKRIEAKYMDLLVEAERENKNLRKKYNIILDV.

In Gallus gallus (Chicken), this protein is Phosphoprotein pp24 (MDV008).